A 505-amino-acid polypeptide reads, in one-letter code: Glutamate--tRNA ligase (505 aa).

The short motif at 12 to 22 (PSPTGDPHVGT) is the 'HIGH' region element. The short motif at 253–257 (KLSKR) is the 'KMSKS' region element. Residue Lys-256 participates in ATP binding.

The protein belongs to the class-I aminoacyl-tRNA synthetase family. Glutamate--tRNA ligase type 1 subfamily. In terms of assembly, monomer.

The protein resides in the cytoplasm. It carries out the reaction tRNA(Glu) + L-glutamate + ATP = L-glutamyl-tRNA(Glu) + AMP + diphosphate. Its function is as follows. Catalyzes the attachment of glutamate to tRNA(Glu) in a two-step reaction: glutamate is first activated by ATP to form Glu-AMP and then transferred to the acceptor end of tRNA(Glu). In Chlamydia pneumoniae (Chlamydophila pneumoniae), this protein is Glutamate--tRNA ligase.